Here is a 154-residue protein sequence, read N- to C-terminus: 6,7-dimethyl-8-ribityllumazine synthase (154 aa).

5-amino-6-(D-ribitylamino)uracil is bound by residues F26, 60-62, and 84-86; these read ALE and CII. Residue 89 to 90 participates in (2S)-2-hydroxy-3-oxobutyl phosphate binding; that stretch reads ET. The active-site Proton donor is the H92. N117 provides a ligand contact to 5-amino-6-(D-ribitylamino)uracil. R131 is a (2S)-2-hydroxy-3-oxobutyl phosphate binding site.

Belongs to the DMRL synthase family.

It catalyses the reaction (2S)-2-hydroxy-3-oxobutyl phosphate + 5-amino-6-(D-ribitylamino)uracil = 6,7-dimethyl-8-(1-D-ribityl)lumazine + phosphate + 2 H2O + H(+). The protein operates within cofactor biosynthesis; riboflavin biosynthesis; riboflavin from 2-hydroxy-3-oxobutyl phosphate and 5-amino-6-(D-ribitylamino)uracil: step 1/2. Catalyzes the formation of 6,7-dimethyl-8-ribityllumazine by condensation of 5-amino-6-(D-ribitylamino)uracil with 3,4-dihydroxy-2-butanone 4-phosphate. This is the penultimate step in the biosynthesis of riboflavin. The sequence is that of 6,7-dimethyl-8-ribityllumazine synthase from Paracidovorax citrulli (strain AAC00-1) (Acidovorax citrulli).